The chain runs to 1493 residues: Inactive serine/threonine-protein kinase TEX14 (1493 aa).

ANK repeat units lie at residues 27–54 (LHEYVKQGNYVKVKRILKKGIYVDAVNS), 55–84 (LGQTALFIAALLGLTKLVDVLVDYGADPNH), and 88–117 (DGSTPVHAAAFSGNQWILSKLLDAGGDLRL). Residues 198–511 (VISAQNIYSF…IMKNDLKDFI (314 aa)) enclose the Protein kinase domain. ATP contacts are provided by residues 204–212 (IYSFGFGKF) and lysine 266. At serine 430 the chain carries Phosphoserine; by PLK1. The span at 559 to 573 (GSQFHSPRGHSSPTG) shows a compositional bias: polar residues. Residues 559–615 (GSQFHSPRGHSSPTGKATPEPPVPDVSPVAQQTHRQDAASPACSVAEEARNPSPDQT) are disordered. Phosphoserine occurs at positions 560 and 660. 2 disordered regions span residues 782–904 (HDSP…RISM) and 940–1081 (AATG…LTPD). The GPPX3Y signature appears at 789–795 (GPPASSY). Positions 846-854 (KASLERDRN) match the D-box motif. Polar residues-rich tracts occupy residues 855 to 904 (QNTS…RISM) and 1001 to 1020 (CGQTDSSDQRGRQSGPQRFT). A compositionally biased stretch (basic and acidic residues) spans 1026–1037 (PPREDEQPEHSE). The segment covering 1053–1064 (YSGQSAQSTCSP) has biased composition (polar residues). A compositionally biased stretch (acidic residues) spans 1066 to 1075 (SSEDTEDMTD). At serine 1100 the chain carries Phosphoserine. A disordered region spans residues 1115–1167 (RPQASGEEKFQMRKNLGKNSEILTKSQFQPIRSPEGEQDETLKEPPKEVKEKD). The span at 1131 to 1144 (GKNSEILTKSQFQP) shows a compositional bias: polar residues. Positions 1154 to 1167 (ETLKEPPKEVKEKD) are enriched in basic and acidic residues. Serine 1262 bears the Phosphoserine mark. Disordered stretches follow at residues 1288–1307 (GAGSSSIAKAPDTSRCATQR) and 1341–1466 (KGQQ…EEEE). The span at 1343–1362 (QQVSSTALDENTASRPGSTE) shows a compositional bias: polar residues. Positions 1363-1380 (NDQRHLEEQETHSNKEDS) are enriched in basic and acidic residues. Position 1400 is a phosphoserine (serine 1400). Basic and acidic residues predominate over residues 1426-1456 (PAREASSKDQEVGEKKRKGEESTKPEKRKPE). Serine 1492 is subject to Phosphoserine.

The protein belongs to the protein kinase superfamily. In terms of assembly, interacts with KIF23 and RBM44. Interacts with CEP55; inhibiting interaction between CEP55 and PDCD6IP/ALIX and TSG101. In terms of processing, phosphorylated on Thr residues by CDK1 during early phases of mitosis, promoting the interaction with PLK1 and recruitment to kinetochores. Phosphorylated on Ser-430 by PLK1 during late prometaphase promotes the rapid depletion from kinetochores and its subsequent degradation by the APC/C complex.

The protein resides in the cytoplasm. The protein localises to the midbody. Its subcellular location is the chromosome. It localises to the centromere. It is found in the kinetochore. Functionally, required both for the formation of intercellular bridges during meiosis and for kinetochore-microtubule attachment during mitosis. Intercellular bridges are evolutionarily conserved structures that connect differentiating germ cells and are required for spermatogenesis and male fertility. Acts by promoting the conversion of midbodies into intercellular bridges via its interaction with CEP55: interaction with CEP55 inhibits the interaction between CEP55 and PDCD6IP/ALIX and TSG101, blocking cell abscission and leading to transform midbodies into intercellular bridges. Also plays a role during mitosis: recruited to kinetochores by PLK1 during early mitosis and regulates the maturation of the outer kinetochores and microtubule attachment. Has no protein kinase activity in vitro. In Bos taurus (Bovine), this protein is Inactive serine/threonine-protein kinase TEX14 (TEX14).